Consider the following 225-residue polypeptide: Ribosome maturation factor RimM (225 aa).

A PRC barrel domain is found at 144–225; it reads ADEFYWVDLI…RIVVDWEADY (82 aa).

Belongs to the RimM family. In terms of assembly, binds ribosomal protein uS19.

It localises to the cytoplasm. Functionally, an accessory protein needed during the final step in the assembly of 30S ribosomal subunit, possibly for assembly of the head region. Essential for efficient processing of 16S rRNA. May be needed both before and after RbfA during the maturation of 16S rRNA. It has affinity for free ribosomal 30S subunits but not for 70S ribosomes. This is Ribosome maturation factor RimM from Burkholderia orbicola (strain AU 1054).